The primary structure comprises 152 residues: Protein CHLOROPLAST VESICULATION (152 aa).

A chloroplast-targeting transit peptide spans 1 to 22 (MAGRISCCLNLPPLDSNSAQSL). A helical membrane pass occupies residues 48–65 (CSFVLGVAATVVIGGIQI). The segment at 92–152 (RWSDKRTCPP…RVNRGGCFSV (61 aa)) is important for chloroplast destabilization and the formation of CV-containing vesicles.

Interacts with the photosystem II subunit PsbO1 via its C-terminal region in the chloroplast thylakoid membrane and in CV-containing vesicles (CCVs). Mostly expressed in senescent and mature leaves but not in young leaves.

Its subcellular location is the plastid. The protein resides in the chloroplast membrane. It localises to the chloroplast thylakoid membrane. It is found in the chloroplast envelope. The protein localises to the vacuole. Its subcellular location is the vesicle. Functionally, triggers stress-induced chloroplast degradation, independently of autophagy and senescence-associated vacuoles. After targeting to the chloroplast, triggers its destabilization and subsequent disassembly, inducing the formation of CV-containing vesicles (CCVs) carrying stromal proteins, envelope membrane proteins, and thylakoid membrane proteins which are released from the chloroplasts and mobilized to the vacuole for proteolysis. The protein is Protein CHLOROPLAST VESICULATION of Arabidopsis thaliana (Mouse-ear cress).